The primary structure comprises 136 residues: Small ribosomal subunit protein uS12 (136 aa).

The residue at position 89 (Asp-89) is a 3-methylthioaspartic acid. The interval 101–136 (SLDTSGVADRKQSRSKYGAKQPKAGVPAPVKGKGKR) is disordered.

It belongs to the universal ribosomal protein uS12 family. In terms of assembly, part of the 30S ribosomal subunit. Contacts proteins S8 and S17. May interact with IF1 in the 30S initiation complex.

Functionally, with S4 and S5 plays an important role in translational accuracy. In terms of biological role, interacts with and stabilizes bases of the 16S rRNA that are involved in tRNA selection in the A site and with the mRNA backbone. Located at the interface of the 30S and 50S subunits, it traverses the body of the 30S subunit contacting proteins on the other side and probably holding the rRNA structure together. The combined cluster of proteins S8, S12 and S17 appears to hold together the shoulder and platform of the 30S subunit. In Pelodictyon phaeoclathratiforme (strain DSM 5477 / BU-1), this protein is Small ribosomal subunit protein uS12.